We begin with the raw amino-acid sequence, 425 residues long: MSTKWEKLEGNVGVLTIEVDAKEVNNSIDAAFKKVVKTINVPGFRKGKMPRPLFEQRFGIESLYQDALDIILPKAYGEAIEEAGIFPVDHPEIDIEKFEKNANLIFTAKVTVKPEVKLGEYKGLAVEKVETTVTDEDVENELKSLQERQAELVVKEEGTVENGDTAVIDFEGFVDGEAFEGGKGENYSLAIGSGTFIPGFEEQVIGLKSGESKDVEVSFPEEYHAAELAGKPATFKVTIHEIKTKELPELNDEFAKEADEAVATLDELKAKLRTNLEEGKKHEAEHKVRDEVVELAAANAEIEIPEAMINTELDRMVREFEQRLSQQGMNLELYYQFTGTDADKLKEQMKEDAQKRVRINLVLEAIIEAENIEVTEEEVTAEVEKMAEMYGMPVDAIKQALGSVDALAEDLKVRKAVDFLVENAA.

The PPIase FKBP-type domain maps to 163–248; that stretch reads GDTAVIDFEG…IHEIKTKELP (86 aa).

This sequence belongs to the FKBP-type PPIase family. Tig subfamily.

The protein resides in the cytoplasm. It carries out the reaction [protein]-peptidylproline (omega=180) = [protein]-peptidylproline (omega=0). In terms of biological role, involved in protein export. Acts as a chaperone by maintaining the newly synthesized protein in an open conformation. Functions as a peptidyl-prolyl cis-trans isomerase. This is Trigger factor from Bacillus cereus (strain G9842).